A 126-amino-acid polypeptide reads, in one-letter code: Glycine cleavage system H protein (126 aa).

The Lipoyl-binding domain maps to 21 to 103 (TVTIGISEHA…YEGGWIVKVK (83 aa)). At Lys62 the chain carries N6-lipoyllysine.

This sequence belongs to the GcvH family. The glycine cleavage system is composed of four proteins: P, T, L and H. The cofactor is (R)-lipoate.

Its function is as follows. The glycine cleavage system catalyzes the degradation of glycine. The H protein shuttles the methylamine group of glycine from the P protein to the T protein. The chain is Glycine cleavage system H protein from Vibrio vulnificus (strain CMCP6).